We begin with the raw amino-acid sequence, 562 residues long: Arginine--tRNA ligase (562 aa).

Positions 121–131 (PNIAKPMGMGH) match the 'HIGH' region motif.

This sequence belongs to the class-I aminoacyl-tRNA synthetase family. Monomer.

The protein resides in the cytoplasm. It carries out the reaction tRNA(Arg) + L-arginine + ATP = L-arginyl-tRNA(Arg) + AMP + diphosphate. The sequence is that of Arginine--tRNA ligase from Limosilactobacillus reuteri (strain DSM 20016) (Lactobacillus reuteri).